Reading from the N-terminus, the 1058-residue chain is Carbamoyl phosphate synthase large chain (1058 aa).

The tract at residues 1–401 (MPKRTDIKKI…SLLKACRSLE (401 aa)) is carboxyphosphate synthetic domain. Residues arginine 129, arginine 169, glycine 175, glycine 176, lysine 208, isoleucine 210, glutamate 215, glycine 241, isoleucine 242, histidine 243, glutamine 284, and glutamate 298 each contribute to the ATP site. Residues 133 to 327 (KALMKALKQP…IAKIAAKIAI (195 aa)) form the ATP-grasp 1 domain. Mg(2+)-binding residues include glutamine 284, glutamate 298, and asparagine 300. Residues glutamine 284, glutamate 298, and asparagine 300 each contribute to the Mn(2+) site. The tract at residues 402 to 546 (IGIYHNECKE…YSTYAFENES (145 aa)) is oligomerization domain. Positions 547-929 (QASPNKSILV…ALYKAFEASY (383 aa)) are carbamoyl phosphate synthetic domain. The ATP-grasp 2 domain maps to 671-861 (EKALHDINIP…MAQVATKLIL (191 aa)). ATP-binding residues include arginine 707, serine 746, isoleucine 748, glutamate 752, glycine 777, valine 778, histidine 779, serine 780, glutamine 820, and glutamate 832. The Mg(2+) site is built by glutamine 820, glutamate 832, and asparagine 834. Residues glutamine 820, glutamate 832, and asparagine 834 each contribute to the Mn(2+) site. An MGS-like domain is found at 930–1058 (MHVPDFGNII…ESRSFSIQSL (129 aa)). Positions 930–1058 (MHVPDFGNII…ESRSFSIQSL (129 aa)) are allosteric domain.

This sequence belongs to the CarB family. As to quaternary structure, composed of two chains; the small (or glutamine) chain promotes the hydrolysis of glutamine to ammonia, which is used by the large (or ammonia) chain to synthesize carbamoyl phosphate. Tetramer of heterodimers (alpha,beta)4. Mg(2+) serves as cofactor. It depends on Mn(2+) as a cofactor.

It catalyses the reaction hydrogencarbonate + L-glutamine + 2 ATP + H2O = carbamoyl phosphate + L-glutamate + 2 ADP + phosphate + 2 H(+). The enzyme catalyses hydrogencarbonate + NH4(+) + 2 ATP = carbamoyl phosphate + 2 ADP + phosphate + 2 H(+). Its pathway is amino-acid biosynthesis; L-arginine biosynthesis; carbamoyl phosphate from bicarbonate: step 1/1. It participates in pyrimidine metabolism; UMP biosynthesis via de novo pathway; (S)-dihydroorotate from bicarbonate: step 1/3. Functionally, large subunit of the glutamine-dependent carbamoyl phosphate synthetase (CPSase). CPSase catalyzes the formation of carbamoyl phosphate from the ammonia moiety of glutamine, carbonate, and phosphate donated by ATP, constituting the first step of 2 biosynthetic pathways, one leading to arginine and/or urea and the other to pyrimidine nucleotides. The large subunit (synthetase) binds the substrates ammonia (free or transferred from glutamine from the small subunit), hydrogencarbonate and ATP and carries out an ATP-coupled ligase reaction, activating hydrogencarbonate by forming carboxy phosphate which reacts with ammonia to form carbamoyl phosphate. The sequence is that of Carbamoyl phosphate synthase large chain from Streptococcus uberis (strain ATCC BAA-854 / 0140J).